A 49-amino-acid chain; its full sequence is Small ribosomal subunit protein uS14B (49 aa).

This sequence belongs to the universal ribosomal protein uS14 family. Zinc-binding uS14 subfamily. Part of the 30S ribosomal subunit.

Functionally, binds 16S rRNA, required for the assembly of 30S particles. The chain is Small ribosomal subunit protein uS14B from Natronomonas pharaonis (strain ATCC 35678 / DSM 2160 / CIP 103997 / JCM 8858 / NBRC 14720 / NCIMB 2260 / Gabara) (Halobacterium pharaonis).